A 520-amino-acid polypeptide reads, in one-letter code: Nuclear GTP-binding protein NUG1 (520 aa).

2 stretches are compositionally biased toward basic residues: residues 1 to 13 and 21 to 34; these read MRVR…RTST and KKAS…KKMA. The interval 1–53 is disordered; sequence MRVRKRQSRRTSTKLKEGIKKKASAHRKKEKKMAKKDVTWRSRSKKDPGIPSN. Residues 35–48 are compositionally biased toward basic and acidic residues; that stretch reads KKDVTWRSRSKKDP. Residues 165–343 enclose the CP-type G domain; the sequence is YDKIFKSVID…ILDSPGICFP (179 aa). GTP-binding positions include 213-216, 287-294, and 336-339; these read NKVD, GYPNVGKS, and DSPG. S337 carries the post-translational modification Phosphoserine.

It belongs to the TRAFAC class YlqF/YawG GTPase family.

It is found in the nucleus. GTPase required for 60S ribosomal subunit export to the cytoplasm. This Saccharomyces cerevisiae (strain ATCC 204508 / S288c) (Baker's yeast) protein is Nuclear GTP-binding protein NUG1 (NUG1).